Consider the following 170-residue polypeptide: MQLQDSIVNIISTYDNAGKYLDSNAITNIKKYFDTADTRLGIVKIINANSSLIIQQASSQLFERNPELIRPSGNAYTTRRYAACLRDIDYYLRYASYSIVANDTSVLSSRVLAGLKDTYNSLGVPLASIVTLLELLKELIKEKTKNINDAHKYIDEPFLYMMKILCENDV.

The residue at position 74 (N74) is an N4-methylasparagine. Residue C84 coordinates (2R,3E)-phycocyanobilin.

This sequence belongs to the phycobiliprotein family. As to quaternary structure, heterodimer of an alpha and a beta chain. In terms of processing, contains one covalently linked bilin chromophore.

It localises to the plastid. It is found in the chloroplast thylakoid membrane. Functionally, light-harvesting photosynthetic bile pigment-protein from the phycobiliprotein complex. Allophycocyanin has a maximum absorption at approximately 650 nanometers. This Cyanidium caldarium (Red alga) protein is Allophycocyanin subunit beta-18 (apcF).